The sequence spans 142 residues: Large ribosomal subunit protein uL13 (142 aa).

Belongs to the universal ribosomal protein uL13 family. Part of the 50S ribosomal subunit.

This protein is one of the early assembly proteins of the 50S ribosomal subunit, although it is not seen to bind rRNA by itself. It is important during the early stages of 50S assembly. The protein is Large ribosomal subunit protein uL13 of Francisella tularensis subsp. holarctica (strain FTNF002-00 / FTA).